A 399-amino-acid chain; its full sequence is Methylthioribose kinase (399 aa).

Residues asparagine 40, lysine 57, and 111–113 contribute to the ATP site; that span reads EDL. Aspartate 229 lines the substrate pocket. Position 246–248 (246–248) interacts with ATP; sequence DAE. Arginine 344 contributes to the substrate binding site.

Belongs to the methylthioribose kinase family. Homodimer.

It catalyses the reaction 5-(methylsulfanyl)-D-ribose + ATP = 5-(methylsulfanyl)-alpha-D-ribose 1-phosphate + ADP + H(+). It participates in amino-acid biosynthesis; L-methionine biosynthesis via salvage pathway; S-methyl-5-thio-alpha-D-ribose 1-phosphate from S-methyl-5'-thioadenosine (hydrolase route): step 2/2. Functionally, catalyzes the phosphorylation of methylthioribose into methylthioribose-1-phosphate. The polypeptide is Methylthioribose kinase (Erwinia tasmaniensis (strain DSM 17950 / CFBP 7177 / CIP 109463 / NCPPB 4357 / Et1/99)).